We begin with the raw amino-acid sequence, 125 residues long: MORF4 family-associated protein 1 (125 aa).

The segment at 76–99 is disordered; the sequence is ESALNHLQGAGGAEPRGPRAEKAD. Residues 94-124 adopt a coiled-coil conformation; it reads RAEKADEKAQEMAKMAEMLVQLVRRIEKSES.

It belongs to the MORF4 family-associated protein family. In terms of assembly, found in a complex composed of MORF4L1, MRFAP1 and RB1. Interacts via its N-terminus with MORF4L1. Interacts with CSTB and MORF4L2.

Its subcellular location is the nucleus. The protein localises to the cytoplasm. The protein resides in the perinuclear region. This Rattus norvegicus (Rat) protein is MORF4 family-associated protein 1.